The following is a 108-amino-acid chain: L-rhamnose mutarotase (108 aa).

Tyr18 is a substrate binding site. The active-site Proton donor is His22. Residues Tyr41 and 76 to 77 each bind substrate; that span reads WW.

This sequence belongs to the rhamnose mutarotase family. In terms of assembly, homodimer.

The protein localises to the cytoplasm. The enzyme catalyses alpha-L-rhamnose = beta-L-rhamnose. It functions in the pathway carbohydrate metabolism; L-rhamnose metabolism. Functionally, involved in the anomeric conversion of L-rhamnose. The protein is L-rhamnose mutarotase of Paraburkholderia phymatum (strain DSM 17167 / CIP 108236 / LMG 21445 / STM815) (Burkholderia phymatum).